The sequence spans 491 residues: Proline--tRNA ligase (491 aa).

Belongs to the class-II aminoacyl-tRNA synthetase family. ProS type 3 subfamily. In terms of assembly, homodimer.

It localises to the cytoplasm. The enzyme catalyses tRNA(Pro) + L-proline + ATP = L-prolyl-tRNA(Pro) + AMP + diphosphate. Functionally, catalyzes the attachment of proline to tRNA(Pro) in a two-step reaction: proline is first activated by ATP to form Pro-AMP and then transferred to the acceptor end of tRNA(Pro). This is Proline--tRNA ligase from Amoebophilus asiaticus (strain 5a2).